Here is a 714-residue protein sequence, read N- to C-terminus: Fimbrin-3 (714 aa).

In terms of domain architecture, EF-hand spans 7-55; it reads VIVSDPWLQSQLTQVELRSLNSKFVALKNQSGKVTLEDLPSVLVKVKSL. Calponin-homology (CH) domains lie at 124–241, 269–372, 393–499, and 514–622; these read QSEK…KIQL, LPPE…HERN, CRDE…RTHM, and DMTD…YWSL. Actin-binding stretches follow at residues 124–372 and 393–622; these read QSEK…HERN and CRDE…YWSL. Residues 628 to 662 show a composition bias toward low complexity; that stretch reads SSESSSSSSDSSSTHSTTTTCTSTCTSTDASPAPS. The interval 628–694 is disordered; that stretch reads SSESSSSSSD…NEVSSLTIEE (67 aa). Over residues 670–680 the composition is skewed to polar residues; that stretch reads SSLNGEVSSLT. The segment covering 681 to 694 has biased composition (acidic residues); the sequence is IEEDNEVSSLTIEE.

As to quaternary structure, interacts with F-actin.

It localises to the cytoplasm. The protein resides in the cytoskeleton. Functionally, cross-links actin filaments (F-actin). Stabilizes and prevents F-actin depolymerization mediated by profilin. May regulate actin cytoarchitecture, cell cycle, cell division, cell elongation and cytoplasmic tractus. This Arabidopsis thaliana (Mouse-ear cress) protein is Fimbrin-3.